The primary structure comprises 38 residues: Large ribosomal subunit protein bL36 (38 aa).

Belongs to the bacterial ribosomal protein bL36 family.

The sequence is that of Large ribosomal subunit protein bL36 from Baumannia cicadellinicola subsp. Homalodisca coagulata.